Reading from the N-terminus, the 660-residue chain is Threonine--tRNA ligase (660 aa).

Positions 1–64 (MSHSVSLTFP…TEGRIEIVTR (64 aa)) constitute a TGS domain. Residues 245–547 (DHRRLGREMD…LLENFAGHMP (303 aa)) form a catalytic region. Residues Cys-341, His-392, and His-524 each contribute to the Zn(2+) site.

This sequence belongs to the class-II aminoacyl-tRNA synthetase family. In terms of assembly, homodimer. Zn(2+) serves as cofactor.

Its subcellular location is the cytoplasm. The enzyme catalyses tRNA(Thr) + L-threonine + ATP = L-threonyl-tRNA(Thr) + AMP + diphosphate + H(+). Its function is as follows. Catalyzes the attachment of threonine to tRNA(Thr) in a two-step reaction: L-threonine is first activated by ATP to form Thr-AMP and then transferred to the acceptor end of tRNA(Thr). Also edits incorrectly charged L-seryl-tRNA(Thr). This Sinorhizobium medicae (strain WSM419) (Ensifer medicae) protein is Threonine--tRNA ligase.